The sequence spans 776 residues: MVPLRSFVLLNGLFFVLLAARTVVTRVIDKDNLDGILETQDGQNLSKEPFNLEETYTADFLAYTFNGTWTSDTTIVYTDTMTGDILQFDVIKQRLTVIVDSSVMDDYIVTHYALSPKGRFLLIGYDFQKGFRHSKFMRYVIYDIELGGYDKIANGMHIALAKWAPLTDDLIYILDNDIYYMRFSNNGFNDVQRVTYDGIVGIVYNGVPDWVYEEEVFHGSSAIWFSPDGSHLAYASFDDRNVQEILYLHYGEPGNLVDQYPTEVKIKYPKAGTSNPVVSLTLVDLHDPTLNKIDLKAPIEVVGTDNVLSNVQWKDFDHVIAMWSNRVQNKTEIVWYNKYGEIVKTLDVVEHEGWVEIKNLFFYKDFVYMRKLQPSGTKAGRFHHVTRYDYTLRSSPIQMDLTPGITEVQDIRAIDHSHGRIYYLATGPGEPSQRNLYSVPVDGSEKPTCISCNVLTPEGNACTYADAIFSPFGQHYVLICQGPDPMIVGIFDNTHKKVYSWENNLSLRSKLARRELPLVKDLYVRANGYESKVRLFLPHNFDESKSYPMLVNVYAGPNTAKIIDVASYGYHAYMTTNRSVIYAYIDGRGSSNKGSKMLFEIYRKLGTVEVEDQISVTRKLQEMFPWIDSKRTGVWGWSYGGFCSAMILAKDLTSVFKCGIAVAPVSSWIYYDSIYTERYMGLPTPEDNLGGYNGTDVSRRVEDIRGKKFMLIHGSGDDNVHYQQSLALAKALEKADIMFEQITYTDEAHALFGVLPHLYHTMDRFWSDCFSLSHAH.

The signal sequence occupies residues 1 to 19 (MVPLRSFVLLNGLFFVLLA). Asn-44, Asn-66, and Asn-329 each carry an N-linked (GlcNAc...) asparagine glycan. Disulfide bonds link Cys-449-Cys-452 and Cys-462-Cys-480. 2 N-linked (GlcNAc...) asparagine glycosylation sites follow: Asn-504 and Asn-577. The Charge relay system role is filled by Ser-638. The cysteines at positions 658 and 769 are disulfide-linked. Asn-693 carries an N-linked (GlcNAc...) asparagine glycan. Residues Asp-717 and His-749 each act as charge relay system in the active site.

This sequence belongs to the peptidase S9B family. DPPIV subfamily. Expressed by the venom gland.

The protein localises to the secreted. The enzyme catalyses Release of an N-terminal dipeptide, Xaa-Yaa-|-Zaa-, from a polypeptide, preferentially when Yaa is Pro, provided Zaa is neither Pro nor hydroxyproline.. Venom dipeptidyl-peptidase which removes N-terminal dipeptides sequentially from polypeptides having unsubstituted N-termini provided that the penultimate residue is proline. May process venom proteins into their active forms and/or modulate the chemotactic activity of immune cells after the insect sting. The polypeptide is Venom dipeptidyl peptidase 4 (Vespa velutina (Asian yellow-legged hornet)).